We begin with the raw amino-acid sequence, 240 residues long: Phosphoribosylaminoimidazole-succinocarboxamide synthase (240 aa).

Belongs to the SAICAR synthetase family.

It catalyses the reaction 5-amino-1-(5-phospho-D-ribosyl)imidazole-4-carboxylate + L-aspartate + ATP = (2S)-2-[5-amino-1-(5-phospho-beta-D-ribosyl)imidazole-4-carboxamido]succinate + ADP + phosphate + 2 H(+). It participates in purine metabolism; IMP biosynthesis via de novo pathway; 5-amino-1-(5-phospho-D-ribosyl)imidazole-4-carboxamide from 5-amino-1-(5-phospho-D-ribosyl)imidazole-4-carboxylate: step 1/2. The sequence is that of Phosphoribosylaminoimidazole-succinocarboxamide synthase from Wolbachia pipientis subsp. Culex pipiens (strain wPip).